We begin with the raw amino-acid sequence, 30 residues long: U1-poneritoxin-Ng3e (30 aa).

As to expression, expressed by the venom gland.

The protein localises to the secreted. Functionally, has activity against some Gram-positive bacteria and S.cerevisiae. Has a non-hemolytic activity. The sequence is that of U1-poneritoxin-Ng3e from Neoponera goeldii (Ponerine ant).